Reading from the N-terminus, the 347-residue chain is Ribosomal RNA small subunit methyltransferase C (347 aa).

This sequence belongs to the methyltransferase superfamily. RsmC family. As to quaternary structure, monomer.

The protein resides in the cytoplasm. It carries out the reaction guanosine(1207) in 16S rRNA + S-adenosyl-L-methionine = N(2)-methylguanosine(1207) in 16S rRNA + S-adenosyl-L-homocysteine + H(+). In terms of biological role, specifically methylates the guanine in position 1207 of 16S rRNA in the 30S particle. This Yersinia pseudotuberculosis serotype IB (strain PB1/+) protein is Ribosomal RNA small subunit methyltransferase C.